A 391-amino-acid chain; its full sequence is Trehalose-phosphate phosphatase (391 aa).

Catalysis depends on Asp-147, which acts as the Nucleophile. Residues Asp-147, Asp-149, and Asp-330 each coordinate Mg(2+). 147-149 (DFD) provides a ligand contact to substrate.

Belongs to the trehalose phosphatase family. Requires Mg(2+) as cofactor.

The enzyme catalyses alpha,alpha-trehalose 6-phosphate + H2O = alpha,alpha-trehalose + phosphate. It participates in glycan biosynthesis; trehalose biosynthesis. Its function is as follows. Removes the phosphate from trehalose 6-phosphate to produce free trehalose. The protein is Trehalose-phosphate phosphatase (otsB) of Mycolicibacterium paratuberculosis (strain ATCC BAA-968 / K-10) (Mycobacterium paratuberculosis).